The sequence spans 274 residues: MQFSKMHGLGNDFVVVDAVTQNVYFPEEVIKKLADRHRGIGFDQMLIVEPPYDPELDFHYRIFNADGSEVAQCGNGARCFARFVTLKGLTDKKDIAVSTTNGKMILTVQDDGMIRVNMGEPVWEPAKIPFIANKFEKNYILRTDIQTVLCGAVSMGNPHCTLVVDDVETANVTELGPLLENHERFPERVNVGFMQVINPNHIKLRVYERGAGETQACGSGACAAAAIGIMQGLLENKVQVDLPGGSLWIEWQGEGHPLYMTGDATHVYDGVIKL.

Substrate contacts are provided by Asn-11, Gln-44, and Asn-64. The active-site Proton donor is the Cys-73. Residues 74–75, Asn-157, Asn-190, and 208–209 contribute to the substrate site; these read GN and ER. The Proton acceptor role is filled by Cys-217. 218-219 contributes to the substrate binding site; the sequence is GS.

Belongs to the diaminopimelate epimerase family. As to quaternary structure, homodimer.

It localises to the cytoplasm. The catalysed reaction is (2S,6S)-2,6-diaminopimelate = meso-2,6-diaminopimelate. It participates in amino-acid biosynthesis; L-lysine biosynthesis via DAP pathway; DL-2,6-diaminopimelate from LL-2,6-diaminopimelate: step 1/1. Its function is as follows. Catalyzes the stereoinversion of LL-2,6-diaminopimelate (L,L-DAP) to meso-diaminopimelate (meso-DAP), a precursor of L-lysine and an essential component of the bacterial peptidoglycan. This chain is Diaminopimelate epimerase, found in Mannheimia succiniciproducens (strain KCTC 0769BP / MBEL55E).